A 68-amino-acid polypeptide reads, in one-letter code: DNA-directed RNA polymerase subunit omega (68 aa).

Belongs to the RNA polymerase subunit omega family. The RNAP catalytic core consists of 2 alpha, 1 beta, 1 beta' and 1 omega subunit. When a sigma factor is associated with the core the holoenzyme is formed, which can initiate transcription.

It carries out the reaction RNA(n) + a ribonucleoside 5'-triphosphate = RNA(n+1) + diphosphate. In terms of biological role, promotes RNA polymerase assembly. Latches the N- and C-terminal regions of the beta' subunit thereby facilitating its interaction with the beta and alpha subunits. The polypeptide is DNA-directed RNA polymerase subunit omega (Citrifermentans bemidjiense (strain ATCC BAA-1014 / DSM 16622 / JCM 12645 / Bem) (Geobacter bemidjiensis)).